We begin with the raw amino-acid sequence, 427 residues long: 3-phosphoshikimate 1-carboxyvinyltransferase (427 aa).

3-phosphoshikimate is bound by residues Lys20, Ser21, and Arg25. Lys20 provides a ligand contact to phosphoenolpyruvate. Residues Gly92 and Arg120 each contribute to the phosphoenolpyruvate site. 3-phosphoshikimate contacts are provided by Ser166, Gln168, Asp312, and Lys339. Gln168 contacts phosphoenolpyruvate. Asp312 (proton acceptor) is an active-site residue. Residues Arg343 and Arg385 each contribute to the phosphoenolpyruvate site.

Belongs to the EPSP synthase family. As to quaternary structure, monomer.

The protein localises to the cytoplasm. The enzyme catalyses 3-phosphoshikimate + phosphoenolpyruvate = 5-O-(1-carboxyvinyl)-3-phosphoshikimate + phosphate. It participates in metabolic intermediate biosynthesis; chorismate biosynthesis; chorismate from D-erythrose 4-phosphate and phosphoenolpyruvate: step 6/7. Its function is as follows. Catalyzes the transfer of the enolpyruvyl moiety of phosphoenolpyruvate (PEP) to the 5-hydroxyl of shikimate-3-phosphate (S3P) to produce enolpyruvyl shikimate-3-phosphate and inorganic phosphate. The chain is 3-phosphoshikimate 1-carboxyvinyltransferase from Streptococcus agalactiae serotype Ia (strain ATCC 27591 / A909 / CDC SS700).